A 3072-amino-acid polypeptide reads, in one-letter code: Platelet binding protein GspB (3072 aa).

A signal peptide spans 1 to 85; the sequence is MFFKRQKGQY…AVLGGAVVTS (85 aa). 10 disordered regions span residues 117-147, 182-254, 876-909, 936-969, 1024-2085, 2106-2139, 2173-2223, 2250-2595, 2625-2965, and 3014-3045; these read EAAT…SASS, SESL…APNV, SAST…SVSA, SASV…SVSA, VSAS…SVSA, TSAS…NASV, and SQSL…GESE. The span at 118–127 shows a compositional bias: polar residues; sequence AATTLSSTEA. The interval 123–236 is ser-rich region 1 (SSR1); it reads SSTEANPVES…SSQQSTEASS (114 aa). 2 stretches are compositionally biased toward low complexity: residues 131–147 and 182–238; these read ESLS…SASS and SESL…SSQT. The basic region (BR) stretch occupies residues 237-603; the sequence is QTGRRRTRRA…GSKFIDTRAG (367 aa). A ser-rich region 2 (SSR2) region spans residues 604-3028; sequence SISKSQSTSN…ESQSSSASQS (2425 aa). Low complexity predominate over residues 3014–3028; it reads SQSLSESQSSSASQS. An LPXTG sorting signal motif is present at residues 3038-3042; it reads LPRTG. Thr3041 carries the pentaglycyl murein peptidoglycan amidated threonine modification. The propeptide at 3042–3072 is removed by sortase; it reads GESENKASILALGLGALGLAFKKRKKNESED.

This sequence belongs to the serine-rich repeat protein (SRRP) family. As to quaternary structure, both SSR domains in the unglycosylated protein bind to Asp2 and Asp3; glycosylated protein binds less well. Interacts with the human cell surface glycoprotein GP1BA. Post-translationally, proteolytically cleaved by a metalloprotease. Both SSR1 and SSR2 domains are glycosylated. A truncated derivative (residues 1-2062) contains 105 nmol per nmol of protein, suggesting at least 10% of the apparent molecular weight is due to carbohydrates. Glucose and N-acetylglucosamine are present in a ratio of 30:73 residues per truncated polypeptide, as well as minor amounts of galactose and N-acetylgalactosamine. Glycosylation occurs intracellularly in the Ser-rich regions SSR1 and SSR2. Glycosylation of SSR2 domain may be required to prevent aggregation of GspB. It is probable that most of the Ser residues in SSR1 and SSR2 are O-GlcNAcylated. Sequential glycosylation by sugar transferases are able to generate complex sugar polymorphisms.

It localises to the secreted. Its subcellular location is the cell wall. In terms of biological role, plays a role in virulence and host-pathogen interactions. Mediates binding to human platelets via interaction with the human cell surface glycoprotein GP1BA. Plays a positive role in biofilm formation, possibly by self-association via the basic region (BR). In Streptococcus gordonii, this protein is Platelet binding protein GspB (gspB).